The sequence spans 374 residues: MKYELDTTDGRARRGRLIFERGVVETPAFMPVGTYGTVKGMTPEEVKETGAQILLGNTFHLWLRPGQEIMKLHGDLHDFMQWHGPILTDSGGFQVFSLGAMRKIKEEGVHFRNPINGDKVFLSPEKSMEIQYDLGSDIVMIFDECTPYPADWDYAKSSMEMSLRWAQRSRQRFDELNNKNALFGIIQGGVYEDLRDVSVKGLVDIGFDGYAVGGLAVGEPKEDMHRILEHVCPQIPEDKPRYLMGVGKPEDLVEGVRRGIDMFDCVMPTRNARNGHLFVTDGVVKIRNAKHKDDTSPLDKDCDCYTCRNYSRAYLHHLDRCNEILGARLNTIHNLRHYQRLMAGLREAIEQGKLELFVADFYGRIGKPVPPLNA.

Asp-89 serves as the catalytic Proton acceptor. Substrate is bound by residues 89 to 93, Asp-143, Gln-187, and Gly-214; that span reads DSGGF. Positions 245 to 251 are RNA binding; the sequence is GVGKPED. The active-site Nucleophile is the Asp-264. Residues 269-273 are RNA binding; important for wobble base 34 recognition; sequence TRNAR. The Zn(2+) site is built by Cys-302, Cys-304, Cys-307, and His-333.

The protein belongs to the queuine tRNA-ribosyltransferase family. Homodimer. Within each dimer, one monomer is responsible for RNA recognition and catalysis, while the other monomer binds to the replacement base PreQ1. The cofactor is Zn(2+).

The enzyme catalyses 7-aminomethyl-7-carbaguanine + guanosine(34) in tRNA = 7-aminomethyl-7-carbaguanosine(34) in tRNA + guanine. It participates in tRNA modification; tRNA-queuosine biosynthesis. Its function is as follows. Catalyzes the base-exchange of a guanine (G) residue with the queuine precursor 7-aminomethyl-7-deazaguanine (PreQ1) at position 34 (anticodon wobble position) in tRNAs with GU(N) anticodons (tRNA-Asp, -Asn, -His and -Tyr). Catalysis occurs through a double-displacement mechanism. The nucleophile active site attacks the C1' of nucleotide 34 to detach the guanine base from the RNA, forming a covalent enzyme-RNA intermediate. The proton acceptor active site deprotonates the incoming PreQ1, allowing a nucleophilic attack on the C1' of the ribose to form the product. After dissociation, two additional enzymatic reactions on the tRNA convert PreQ1 to queuine (Q), resulting in the hypermodified nucleoside queuosine (7-(((4,5-cis-dihydroxy-2-cyclopenten-1-yl)amino)methyl)-7-deazaguanosine). The chain is Queuine tRNA-ribosyltransferase from Serratia proteamaculans (strain 568).